The sequence spans 600 residues: Netrin-1 (600 aa).

An N-terminal signal peptide occupies residues M1–G24. The Laminin N-terminal domain maps to H47–R284. N95, N116, and N131 each carry an N-linked (GlcNAc...) asparagine glycan. 14 disulfide bridges follow: C119/C152, C285/C294, C287/C304, C306/C315, C318/C338, C341/C350, C343/C368, C371/C380, C383/C401, C404/C416, C406/C423, C425/C434, C437/C451, and C472/C544. 3 consecutive Laminin EGF-like domains span residues C285–A340, C341–A403, and C404–K453. N417 carries an N-linked (GlcNAc...) asparagine glycan. The NTR domain maps to C472 to L600. The Cell attachment site motif lies at R530 to D532.

Binds to its receptors; DCC, UNC5A, UNC5B, UNC5C and probably UNC5D. Binds to its receptor; DSCAM. Interacts with APP.

The protein resides in the secreted. The protein localises to the cytoplasm. Functionally, netrins control guidance of CNS commissural axons and peripheral motor axons. Its association with either DCC or some UNC5 receptors will lead to axon attraction or repulsion, respectively. Binding to UNC5C might cause dissociation of UNC5C from polymerized TUBB3 in microtubules and thereby lead to increased microtubule dynamics and axon repulsion. Involved in dorsal root ganglion axon projection towards the spinal cord. It also serves as a survival factor via its association with its receptors which prevent the initiation of apoptosis. Involved in colorectal tumorigenesis by regulating apoptosis. This Sus scrofa (Pig) protein is Netrin-1 (NTN1).